We begin with the raw amino-acid sequence, 128 residues long: NADH-quinone oxidoreductase subunit A (128 aa).

3 helical membrane-spanning segments follow: residues 5 to 25 (IPIL…VVIA), 72 to 92 (LTAM…PWAV), and 100 to 120 (FALV…AYVW).

It belongs to the complex I subunit 3 family. As to quaternary structure, NDH-1 is composed of 14 different subunits. Subunits NuoA, H, J, K, L, M, N constitute the membrane sector of the complex.

The protein localises to the cell membrane. It catalyses the reaction a quinone + NADH + 5 H(+)(in) = a quinol + NAD(+) + 4 H(+)(out). Its function is as follows. NDH-1 shuttles electrons from NADH, via FMN and iron-sulfur (Fe-S) centers, to quinones in the respiratory chain. The immediate electron acceptor for the enzyme in this species is believed to be a menaquinone. Couples the redox reaction to proton translocation (for every two electrons transferred, four hydrogen ions are translocated across the cytoplasmic membrane), and thus conserves the redox energy in a proton gradient. This chain is NADH-quinone oxidoreductase subunit A, found in Mycobacterium bovis (strain ATCC BAA-935 / AF2122/97).